We begin with the raw amino-acid sequence, 116 residues long: Protein Rev (116 aa).

Residues Ser-5 and Ser-8 each carry the phosphoserine; by host CK2 modification. Positions 18-26 (LIKFLYQSN) are homomultimerization. The tract at residues 23–48 (YQSNPPPNPEGTRQARRNRRRRWRER) is disordered. Positions 34–50 (TRQARRNRRRRWRERQR) match the Nuclear localization signal and RNA-binding (RRE) motif. A compositionally biased stretch (basic residues) spans 36-48 (QARRNRRRRWRER). The Nuclear export signal and binding to XPO1 signature appears at 73–84 (LQLPPLERLNLD). Residues 90 to 116 (GTSGTQGVGSPEILVESPAVLEPGTKE) are disordered. Phosphoserine; by host occurs at positions 92 and 99.

Belongs to the HIV-1 REV protein family. In terms of assembly, homomultimer; when bound to the RRE. Multimeric assembly is essential for activity and may involve XPO1. Binds to human KPNB1, XPO1, TNPO1, RANBP5 and IPO7. Interacts with the viral Integrase. Interacts with human KHDRBS1. Interacts with human NAP1; this interaction decreases Rev multimerization and stimulates its activity. Interacts with human DEAD-box helicases DDX3 and DDX24; these interactions may serve for viral RNA export to the cytoplasm and packaging, respectively. Interacts with human PSIP1; this interaction may inhibit HIV-1 DNA integration by promoting dissociation of the Integrase-LEDGF/p75 complex. In terms of processing, asymmetrically arginine dimethylated at one site by host PRMT6. Methylation impairs the RNA-binding activity and export of viral RNA from the nucleus to the cytoplasm. Phosphorylated by protein kinase CK2. Presence of, and maybe binding to the N-terminus of the regulatory beta subunit of CK2 is necessary for CK2-mediated Rev's phosphorylation.

Its subcellular location is the host nucleus. It is found in the host nucleolus. The protein resides in the host cytoplasm. In terms of biological role, escorts unspliced or incompletely spliced viral pre-mRNAs (late transcripts) out of the nucleus of infected cells. These pre-mRNAs carry a recognition sequence called Rev responsive element (RRE) located in the env gene, that is not present in fully spliced viral mRNAs (early transcripts). This function is essential since most viral proteins are translated from unspliced or partially spliced pre-mRNAs which cannot exit the nucleus by the pathway used by fully processed cellular mRNAs. Rev itself is translated from a fully spliced mRNA that readily exits the nucleus. Rev's nuclear localization signal (NLS) binds directly to KPNB1/Importin beta-1 without previous binding to KPNA1/Importin alpha-1. KPNB1 binds to the GDP bound form of RAN (Ran-GDP) and targets Rev to the nucleus. In the nucleus, the conversion from Ran-GDP to Ran-GTP dissociates Rev from KPNB1 and allows Rev's binding to the RRE in viral pre-mRNAs. Rev multimerization on the RRE via cooperative assembly exposes its nuclear export signal (NES) to the surface. Rev can then form a complex with XPO1/CRM1 and Ran-GTP, leading to nuclear export of the complex. Conversion from Ran-GTP to Ran-GDP mediates dissociation of the Rev/RRE/XPO1/RAN complex, so that Rev can return to the nucleus for a subsequent round of export. Beside KPNB1, also seems to interact with TNPO1/Transportin-1, RANBP5/IPO5 and IPO7/RANBP7 for nuclear import. The nucleoporin-like HRB/RIP is an essential cofactor that probably indirectly interacts with Rev to release HIV RNAs from the perinuclear region to the cytoplasm. In Human immunodeficiency virus type 1 group M subtype B (isolate OYI) (HIV-1), this protein is Protein Rev.